The sequence spans 1043 residues: Calcium-transporting ATPase 1, plasma membrane-type (1043 aa).

At 1 to 178 (MSFIRKKSME…FLWDASQDMT (178 aa)) the chain is on the cytoplasmic side. A run of 2 helical transmembrane segments spans residues 179 to 199 (LLLLAFCAAVSVAIGLATEGW) and 202 to 222 (GMYDGVGIMLTILLVVMITAA). Topologically, residues 223 to 258 (SDYKQSLQFRDLDKEKKKIDVQVTRDGYRQKVSIYD) are cytoplasmic. The next 2 helical transmembrane spans lie at 259 to 279 (IVVGDIVHLSIGDQVPADGLF) and 356 to 376 (VATIIGKIGLAFAVLTFTVLM). Residues 377–395 (ARFLLGKAGAPGGLLRWRM) are Cytoplasmic-facing. The chain crosses the membrane as a helical span at residues 396-416 (VDALAVLNFFAVAVTIIVVAV). The active-site 4-aspartylphosphate intermediate is Asp460. Residues Asp761 and Asp765 each contribute to the Mg(2+) site. The helical transmembrane segment at 824–844 (LTVNVVALMVNFISASFTGSA) threads the bilayer. Residue Pro845 is a topological domain, cytoplasmic. A run of 2 helical transmembrane segments spans residues 846-866 (LTIVQLLWVNLIMDTLGALAL) and 891-911 (VMWRNIVGQSIYQLVVLGVLL). Over 912-955 (LRGKSLLQINGPQADSLLNTFVFNTFVFCQVFNEVNSREMEKIN) the chain is Cytoplasmic. The next 2 helical transmembrane spans lie at 956–976 (VFSGIFSSWIFSAVVGVTAGF) and 998–1018 (WLTSVLIGSVGLVIGAILKCI). The Cytoplasmic segment spans residues 1019–1043 (PVESGSDASDRHDGYRPIPTGPSAV). The tract at residues 1023–1043 (GSDASDRHDGYRPIPTGPSAV) is disordered.

It belongs to the cation transport ATPase (P-type) (TC 3.A.3) family. Type IIB subfamily.

Its subcellular location is the membrane. It catalyses the reaction Ca(2+)(in) + ATP + H2O = Ca(2+)(out) + ADP + phosphate + H(+). Activated by calmodulin. Its function is as follows. This magnesium-dependent enzyme catalyzes the hydrolysis of ATP coupled with the translocation of calcium from the cytosol out of the cell, into the endoplasmic reticulum, or into organelles. This is Calcium-transporting ATPase 1, plasma membrane-type from Oryza sativa subsp. japonica (Rice).